We begin with the raw amino-acid sequence, 179 residues long: Large ribosomal subunit protein uL6 (179 aa).

The protein belongs to the universal ribosomal protein uL6 family. As to quaternary structure, part of the 50S ribosomal subunit.

This protein binds to the 23S rRNA, and is important in its secondary structure. It is located near the subunit interface in the base of the L7/L12 stalk, and near the tRNA binding site of the peptidyltransferase center. The protein is Large ribosomal subunit protein uL6 of Prochlorococcus marinus (strain MIT 9211).